Reading from the N-terminus, the 247-residue chain is Eukaryotic translation initiation factor 6-1 (247 aa).

This sequence belongs to the eIF-6 family. As to quaternary structure, monomer. Associates with the 60S ribosomal subunit.

It is found in the cytoplasm. The protein resides in the nucleus. The protein localises to the nucleolus. In terms of biological role, binds to the 60S ribosomal subunit and prevents its association with the 40S ribosomal subunit to form the 80S initiation complex in the cytoplasm. May also be involved in ribosome biogenesis. The sequence is that of Eukaryotic translation initiation factor 6-1 from Arabidopsis thaliana (Mouse-ear cress).